Here is a 646-residue protein sequence, read N- to C-terminus: P-selectin (646 aa).

Positions 1 to 41 (MASCPKAIWNWRFQRAVFRTVQLLCFSVLIFEVINQKEVSA) are cleaved as a signal peptide. Residues 42 to 587 (WTYHYSNKTY…QAGPLTIQET (546 aa)) lie on the Extracellular side of the membrane. N-linked (GlcNAc...) asparagine glycosylation is found at Asn48, Asn54, and Asn80. A C-type lectin domain is found at 58–158 (AFCQKYYTDL…PCWKRKRALC (101 aa)). 17 disulfide bridges follow: Cys60–Cys158, Cys131–Cys150, Cys163–Cys174, Cys168–Cys183, Cys185–Cys194, Cys200–Cys244, Cys230–Cys257, Cys262–Cys306, Cys292–Cys319, Cys324–Cys368, Cys354–Cys381, Cys386–Cys430, Cys416–Cys443, Cys458–Cys502, Cys488–Cys515, Cys520–Cys564, and Cys550–Cys577. Residues Glu121, Asn123, and Asn124 each coordinate Ca(2+). Asn123 is a binding site for a carbohydrate. Residues Glu133 and Asn146 each coordinate a carbohydrate. 2 residues coordinate Ca(2+): Asn146 and Asp147. An EGF-like domain is found at 159 to 195 (YRASCQDMSCSKQGECIETIGNYTCSCYPGFYGPECE). Asn180 carries N-linked (GlcNAc...) asparagine glycosylation. 6 Sushi domains span residues 198 to 259 (RECG…QCVA), 260 to 321 (VQCP…VCKA), 322 to 383 (LQCQ…ECQA), 384 to 445 (VTCA…TCEE), 456 to 517 (VQCP…TCRA), and 518 to 579 (VKCA…TCQA). Asn212 and Asn219 each carry an N-linked (GlcNAc...) asparagine glycan. Asn336 carries an N-linked (GlcNAc...) asparagine glycan. Asn481 carries N-linked (GlcNAc...) asparagine glycosylation. 3 N-linked (GlcNAc...) asparagine glycosylation sites follow: Asn532, Asn539, and Asn557. The chain crosses the membrane as a helical span at residues 588–611 (LTYVGGAAAGTTGLVTGSILLALL). Residues 612–646 (RRRCRQKDDGKSPLNPQSHLGTYGVFTNAAFDPSP) lie on the Cytoplasmic side of the membrane. The Endocytosis signal signature appears at 634–637 (YGVF). The interaction with SNX17 stretch occupies residues 637–646 (FTNAAFDPSP).

It belongs to the selectin/LECAM family. Interacts with SNX17. Interacts with SELPLG/PSGL1 and PODXL2 and mediates neutrophil adhesion and leukocyte rolling. This interaction requires the sialyl-Lewis X epitope of SELPLG and PODXL2, and specific tyrosine sulfation on SELPLG. Interacts (via C-type lectin domain) with alpha-IIb/beta3 integrin ITGA2B:ITGB3 and alpha-V/beta-3 integrin ITGAV:ITGB3. Interacts with alpha5/beta1 integrin ITGA5:ITGB1 and alpha4/beta1 integrin ITGA4:ITGB. As to expression, stored in the alpha-granules of platelets and Weibel-Palade bodies of endothelial cells. Upon cell activation by agonists, P-selectin is transported rapidly to the cell surface.

The protein resides in the cell membrane. Functionally, ca(2+)-dependent receptor for myeloid cells that binds to carbohydrates on neutrophils and monocytes. Mediates the interaction of activated endothelial cells or platelets with leukocytes. The ligand recognized is sialyl-Lewis X. Mediates rapid rolling of leukocyte rolling over vascular surfaces during the initial steps in inflammation through interaction with SELPLG. Mediates cell-cell interactions and cell adhesion via the interaction with integrin alpha-IIb/beta3 (ITGA2B:ITGB3) and integrin alpha-V/beta-3 (ITGAV:ITGB3). In Bos taurus (Bovine), this protein is P-selectin (SELP).